A 269-amino-acid chain; its full sequence is tRNA pseudouridine synthase A (269 aa).

The active-site Nucleophile is the Asp51. Substrate is bound at residue Tyr109.

It belongs to the tRNA pseudouridine synthase TruA family. As to quaternary structure, homodimer.

It catalyses the reaction uridine(38/39/40) in tRNA = pseudouridine(38/39/40) in tRNA. Its function is as follows. Formation of pseudouridine at positions 38, 39 and 40 in the anticodon stem and loop of transfer RNAs. This Haemophilus influenzae (strain ATCC 51907 / DSM 11121 / KW20 / Rd) protein is tRNA pseudouridine synthase A.